A 404-amino-acid chain; its full sequence is Glucose-1-phosphate adenylyltransferase (404 aa).

Residues Tyr99, Gly164, 179-180, and Ser197 each bind alpha-D-glucose 1-phosphate; that span reads EK.

This sequence belongs to the bacterial/plant glucose-1-phosphate adenylyltransferase family.

It carries out the reaction alpha-D-glucose 1-phosphate + ATP + H(+) = ADP-alpha-D-glucose + diphosphate. It participates in capsule biogenesis; capsule polysaccharide biosynthesis. The protein operates within glycan biosynthesis; glycogen biosynthesis. Its function is as follows. Involved in the biosynthesis of ADP-glucose, a building block, required in the biosynthesis of maltose-1-phosphate (M1P) and in the elongation reactions to produce linear alpha-1,4-glucans. Catalyzes the reaction between ATP and alpha-D-glucose 1-phosphate (G1P) to produce pyrophosphate and ADP-Glc. The polypeptide is Glucose-1-phosphate adenylyltransferase (Mycobacterium ulcerans (strain Agy99)).